Reading from the N-terminus, the 323-residue chain is DNA-directed RNA polymerase subunit alpha (323 aa).

The tract at residues 1–233 (MGQEKVTVST…DLFIPFFHAE (233 aa)) is alpha N-terminal domain (alpha-NTD). Residues 264–323 (IALKYIYIDQSELPPRVYNCLKRSNINTFLELLNNSQEELMKIQDFRIEDVKHILDVLEI) form an alpha C-terminal domain (alpha-CTD) region.

This sequence belongs to the RNA polymerase alpha chain family. In terms of assembly, in plastids the minimal PEP RNA polymerase catalytic core is composed of four subunits: alpha, beta, beta', and beta''. When a (nuclear-encoded) sigma factor is associated with the core the holoenzyme is formed, which can initiate transcription.

It is found in the plastid. It localises to the chloroplast. The catalysed reaction is RNA(n) + a ribonucleoside 5'-triphosphate = RNA(n+1) + diphosphate. In terms of biological role, DNA-dependent RNA polymerase catalyzes the transcription of DNA into RNA using the four ribonucleoside triphosphates as substrates. The polypeptide is DNA-directed RNA polymerase subunit alpha (Morus indica (Mulberry)).